The chain runs to 787 residues: PAN2-PAN3 deadenylation complex subunit pan3 (787 aa).

Residues 1 to 20 form a disordered region; that stretch reads MNSGLTPSPSPAVAAAGPAG. The segment covering 11–20 has biased composition (low complexity); it reads PAVAAAGPAG. The segment at 23-51 adopts a C3H1-type zinc-finger fold; it reads GSKLKFCRYYAKDRTCFYGDECQFLHDDQ. Disordered regions lie at residues 131 to 162, 179 to 210, and 226 to 291; these read EATY…AAHD, TMSQ…MSQS, and GGPT…PPST. Composition is skewed to low complexity over residues 143-154 and 200-210; these read NSSSSPSLLNDS and STSRLSNMSQS. Residues 185–200 carry the PABPC-interacting motif-2 (PAM-2) motif; sequence KTPNPTASEFIPKGGS. Residues 265–290 are compositionally biased toward polar residues; it reads TPNPANYMVPTSASTPVTNSVSQPPS. The tract at residues 365–650 is pseudokinase domain; sequence QIDQADMPGV…SVNDIMPMIG (286 aa). Residues arginine 422, 471-478, and 545-546 each bind ATP; these read DFHAGSET and TK. A coiled-coil region spans residues 651–689; it reads ARFYTQLDAAQMRNDVIEEDLAKEVQNGRLFRLLAKLGT. Positions 690 to 787 are knob domain; the sequence is INERPEFQKD…ELVAAANGQL (98 aa).

Belongs to the protein kinase superfamily. PAN3 family. Homodimer. Forms a heterotrimer with a catalytic subunit pan2 to form the poly(A)-nuclease (PAN) deadenylation complex. Interacts (via PAM-2 motif) with poly(A)-binding protein pabpc1 (via PABC domain), conferring substrate specificity of the enzyme complex. Interacts with the GW182 family proteins tnrc6a, tnrc6b and tnrc6c.

It is found in the cytoplasm. The protein localises to the P-body. Functionally, regulatory subunit of the poly(A)-nuclease (PAN) deadenylation complex, one of two cytoplasmic mRNA deadenylases involved in general and miRNA-mediated mRNA turnover. PAN specifically shortens poly(A) tails of RNA and the activity is stimulated by poly(A)-binding protein (PABP). PAN deadenylation is followed by rapid degradation of the shortened mRNA tails by the CCR4-NOT complex. Deadenylated mRNAs are then degraded by two alternative mechanisms, namely exosome-mediated 3'-5' exonucleolytic degradation, or deadenylation-dependent mRNA decaping and subsequent 5'-3' exonucleolytic degradation by XRN1. PAN3 acts as a positive regulator for PAN activity, recruiting the catalytic subunit PAN2 to mRNA via its interaction with RNA and PABP, and to miRNA targets via its interaction with GW182 family proteins. The sequence is that of PAN2-PAN3 deadenylation complex subunit pan3 from Xenopus tropicalis (Western clawed frog).